A 418-amino-acid polypeptide reads, in one-letter code: uncharacterized protein (418 aa).

This is an uncharacterized protein from Escherichia coli O157:H7.